Reading from the N-terminus, the 495-residue chain is UDP-N-acetylmuramoyl-L-alanyl-D-glutamate--2,6-diaminopimelate ligase (495 aa).

Residue serine 29 coordinates UDP-N-acetyl-alpha-D-muramoyl-L-alanyl-D-glutamate. 111–117 (GTNGKTS) contributes to the ATP binding site. UDP-N-acetyl-alpha-D-muramoyl-L-alanyl-D-glutamate contacts are provided by residues 153–154 (TT), serine 180, glutamine 186, and arginine 188. Lysine 220 carries the N6-carboxylysine modification. Meso-2,6-diaminopimelate is bound by residues arginine 384, 408 to 411 (DNPR), glycine 459, and glutamate 463. A Meso-diaminopimelate recognition motif motif is present at residues 408–411 (DNPR).

This sequence belongs to the MurCDEF family. MurE subfamily. Mg(2+) serves as cofactor. Carboxylation is probably crucial for Mg(2+) binding and, consequently, for the gamma-phosphate positioning of ATP.

It localises to the cytoplasm. It catalyses the reaction UDP-N-acetyl-alpha-D-muramoyl-L-alanyl-D-glutamate + meso-2,6-diaminopimelate + ATP = UDP-N-acetyl-alpha-D-muramoyl-L-alanyl-gamma-D-glutamyl-meso-2,6-diaminopimelate + ADP + phosphate + H(+). It participates in cell wall biogenesis; peptidoglycan biosynthesis. In terms of biological role, catalyzes the addition of meso-diaminopimelic acid to the nucleotide precursor UDP-N-acetylmuramoyl-L-alanyl-D-glutamate (UMAG) in the biosynthesis of bacterial cell-wall peptidoglycan. The protein is UDP-N-acetylmuramoyl-L-alanyl-D-glutamate--2,6-diaminopimelate ligase of Xylella fastidiosa (strain 9a5c).